Consider the following 544-residue polypeptide: Cytochrome P450 monooxygenase verL (544 aa).

The chain crosses the membrane as a helical span at residues 3 to 23; that stretch reads VALFPILPIGCLLIYIIFKLW. A heme-binding site is contributed by C446. A disordered region spans residues 520 to 544; that stretch reads QEKGIDGWKGKKESSSEENRGVSSR.

Belongs to the cytochrome P450 family. It depends on heme as a cofactor.

Its subcellular location is the membrane. It participates in mycotoxin biosynthesis. Functionally, cytochrome P450 monooxygenase; part of the gene cluster that mediates the biosynthesis of 11'-deoxyverticillin A, one of the dimeric epipolythiodioxopiperazines (ETPs) from the verticillin family that act as mycotoxins. 11'-deoxyverticillin A is required for normal conidiation. The nonribosomal peptide synthetase verP is speculated to be responsible for condensation of amino acids to form the carbon skeleton of verticillin, whereas the cluster-specific tailoring enzymes are involved in further modifications leading to the production of 11'-deoxyverticillin A. This chain is Cytochrome P450 monooxygenase verL, found in Clonostachys rogersoniana.